Here is a 153-residue protein sequence, read N- to C-terminus: Pheromone-binding protein Gp-9 (153 aa).

A signal peptide spans 1–19 (MKTFVLHIFIFALVAFASA). 3 disulfides stabilise this stretch: cysteine 37/cysteine 77, cysteine 73/cysteine 129, and cysteine 118/cysteine 138.

This sequence belongs to the PBP/GOBP family. In terms of assembly, homodimer.

The protein localises to the secreted. Colony queen number, a major feature of social organization, is associated with worker genotype for Gp-9. Colonies are headed by either a single reproductive queen (monogyne form) or multiple queens (polygyne form). Differences in worker Gp-9 genotypes between social forms may cause differences in workers' abilities to recognize queens and regulate their numbers. The polypeptide is Pheromone-binding protein Gp-9 (Solenopsis richteri (Black imported fire ant)).